The sequence spans 155 residues: SsrA-binding protein (155 aa).

It belongs to the SmpB family.

The protein localises to the cytoplasm. Its function is as follows. Required for rescue of stalled ribosomes mediated by trans-translation. Binds to transfer-messenger RNA (tmRNA), required for stable association of tmRNA with ribosomes. tmRNA and SmpB together mimic tRNA shape, replacing the anticodon stem-loop with SmpB. tmRNA is encoded by the ssrA gene; the 2 termini fold to resemble tRNA(Ala) and it encodes a 'tag peptide', a short internal open reading frame. During trans-translation Ala-aminoacylated tmRNA acts like a tRNA, entering the A-site of stalled ribosomes, displacing the stalled mRNA. The ribosome then switches to translate the ORF on the tmRNA; the nascent peptide is terminated with the 'tag peptide' encoded by the tmRNA and targeted for degradation. The ribosome is freed to recommence translation, which seems to be the essential function of trans-translation. This Bordetella bronchiseptica (strain ATCC BAA-588 / NCTC 13252 / RB50) (Alcaligenes bronchisepticus) protein is SsrA-binding protein.